The primary structure comprises 123 residues: Large ribosomal subunit protein bL17 (123 aa).

The protein belongs to the bacterial ribosomal protein bL17 family. In terms of assembly, part of the 50S ribosomal subunit. Contacts protein L32.

The chain is Large ribosomal subunit protein bL17 from Borreliella afzelii (strain PKo) (Borrelia afzelii).